Consider the following 97-residue polypeptide: M-zodatoxin-Lt7a (97 aa).

The signal sequence occupies residues 1–22; sequence MKFYVVALALLVAFVCIAESRS. Positions 23–63 are excised as a propeptide; that stretch reads VETERAVDADLEDDLDDLEEYLEGIAEALELEDFPDTEEAR. The short motif at 60-63 is the Processing quadruplet motif element; it reads EEAR.

In terms of processing, cleavage of the propeptide depends on the processing quadruplet motif (XXXR, with at least one of X being E). In terms of tissue distribution, expressed by the venom gland.

Its subcellular location is the secreted. Functionally, does not have antimicrobial or antifungal activity. Does not have hemolytic activity against rabbit erythrocytes. However, it causes some conductance changes in planar bilayer membranes, without membrane rupture, suggesting a cytolytic function on other biological targets. It causes paralysis, but is not lethal when injected into insect (M.domestica) larvae. This chain is M-zodatoxin-Lt7a, found in Lachesana tarabaevi (Spider).